A 164-amino-acid polypeptide reads, in one-letter code: UPF0114 protein KPN78578_33570 (164 aa).

Transmembrane regions (helical) follow at residues 15 to 35 (LLAP…IKFF), 53 to 73 (MILT…LVMV), 109 to 126 (VAAS…RVFM), and 136 to 156 (LMWY…MGYL).

This sequence belongs to the UPF0114 family.

The protein localises to the cell membrane. In Klebsiella pneumoniae subsp. pneumoniae (strain ATCC 700721 / MGH 78578), this protein is UPF0114 protein KPN78578_33570.